A 438-amino-acid chain; its full sequence is Trigger factor (438 aa).

Residues 160 to 245 enclose the PPIase FKBP-type domain; sequence DDKVTIDFVG…VKKIQQAELP (86 aa).

Belongs to the FKBP-type PPIase family. Tig subfamily.

The protein localises to the cytoplasm. The enzyme catalyses [protein]-peptidylproline (omega=180) = [protein]-peptidylproline (omega=0). Functionally, involved in protein export. Acts as a chaperone by maintaining the newly synthesized protein in an open conformation. Functions as a peptidyl-prolyl cis-trans isomerase. The polypeptide is Trigger factor (Francisella tularensis subsp. novicida (strain U112)).